The sequence spans 369 residues: 4-hydroxy-3-methylbut-2-en-1-yl diphosphate synthase (flavodoxin) (369 aa).

Positions 270, 273, 305, and 312 each coordinate [4Fe-4S] cluster.

This sequence belongs to the IspG family. It depends on [4Fe-4S] cluster as a cofactor.

The catalysed reaction is (2E)-4-hydroxy-3-methylbut-2-enyl diphosphate + oxidized [flavodoxin] + H2O + 2 H(+) = 2-C-methyl-D-erythritol 2,4-cyclic diphosphate + reduced [flavodoxin]. It participates in isoprenoid biosynthesis; isopentenyl diphosphate biosynthesis via DXP pathway; isopentenyl diphosphate from 1-deoxy-D-xylulose 5-phosphate: step 5/6. Its function is as follows. Converts 2C-methyl-D-erythritol 2,4-cyclodiphosphate (ME-2,4cPP) into 1-hydroxy-2-methyl-2-(E)-butenyl 4-diphosphate. In Pseudomonas putida (strain ATCC 700007 / DSM 6899 / JCM 31910 / BCRC 17059 / LMG 24140 / F1), this protein is 4-hydroxy-3-methylbut-2-en-1-yl diphosphate synthase (flavodoxin).